A 151-amino-acid polypeptide reads, in one-letter code: MSIVQNKKAFHDYFIEEKYEAGIVLEGWEVKAIRAGRAQLKEAYILIRKGELFLIGSHISPLATASTHVNPDPVKTRKLLLHASQIRELIGKVERAGYTLIPLDMHYKSGRIKLEIGLARGKKQYDKRETEKRKEWERDKQRLLRIRRSSD.

This sequence belongs to the SmpB family.

Its subcellular location is the cytoplasm. In terms of biological role, required for rescue of stalled ribosomes mediated by trans-translation. Binds to transfer-messenger RNA (tmRNA), required for stable association of tmRNA with ribosomes. tmRNA and SmpB together mimic tRNA shape, replacing the anticodon stem-loop with SmpB. tmRNA is encoded by the ssrA gene; the 2 termini fold to resemble tRNA(Ala) and it encodes a 'tag peptide', a short internal open reading frame. During trans-translation Ala-aminoacylated tmRNA acts like a tRNA, entering the A-site of stalled ribosomes, displacing the stalled mRNA. The ribosome then switches to translate the ORF on the tmRNA; the nascent peptide is terminated with the 'tag peptide' encoded by the tmRNA and targeted for degradation. The ribosome is freed to recommence translation, which seems to be the essential function of trans-translation. This is SsrA-binding protein from Nitrosomonas europaea (strain ATCC 19718 / CIP 103999 / KCTC 2705 / NBRC 14298).